Reading from the N-terminus, the 87-residue chain is Putative defensin-like protein 317 (87 aa).

Positions methionine 1–glycine 24 are cleaved as a signal peptide. Cystine bridges form between cysteine 38–cysteine 71, cysteine 47–cysteine 80, and cysteine 56–cysteine 82.

Belongs to the DEFL family.

It is found in the secreted. The polypeptide is Putative defensin-like protein 317 (Arabidopsis thaliana (Mouse-ear cress)).